The primary structure comprises 240 residues: 4-hydroxy-tetrahydrodipicolinate reductase (240 aa).

Residues 79–81 and 103–106 each bind NAD(+); these read ATT and SANM. The active-site Proton donor/acceptor is H135. Residue H136 participates in (S)-2,3,4,5-tetrahydrodipicolinate binding. The active-site Proton donor is the K139. Residue 145-146 participates in (S)-2,3,4,5-tetrahydrodipicolinate binding; the sequence is GT.

Belongs to the DapB family.

The protein resides in the cytoplasm. It catalyses the reaction (S)-2,3,4,5-tetrahydrodipicolinate + NAD(+) + H2O = (2S,4S)-4-hydroxy-2,3,4,5-tetrahydrodipicolinate + NADH + H(+). The catalysed reaction is (S)-2,3,4,5-tetrahydrodipicolinate + NADP(+) + H2O = (2S,4S)-4-hydroxy-2,3,4,5-tetrahydrodipicolinate + NADPH + H(+). Its pathway is amino-acid biosynthesis; L-lysine biosynthesis via DAP pathway; (S)-tetrahydrodipicolinate from L-aspartate: step 4/4. Catalyzes the conversion of 4-hydroxy-tetrahydrodipicolinate (HTPA) to tetrahydrodipicolinate. This chain is 4-hydroxy-tetrahydrodipicolinate reductase, found in Staphylococcus aureus (strain JH1).